A 954-amino-acid polypeptide reads, in one-letter code: Bifunctional glutamine synthetase adenylyltransferase/adenylyl-removing enzyme (954 aa).

The adenylyl removase stretch occupies residues Met1–Thr450. The interval Gly454 to Asp954 is adenylyl transferase.

This sequence belongs to the GlnE family. It depends on Mg(2+) as a cofactor.

The enzyme catalyses [glutamine synthetase]-O(4)-(5'-adenylyl)-L-tyrosine + phosphate = [glutamine synthetase]-L-tyrosine + ADP. The catalysed reaction is [glutamine synthetase]-L-tyrosine + ATP = [glutamine synthetase]-O(4)-(5'-adenylyl)-L-tyrosine + diphosphate. Involved in the regulation of glutamine synthetase GlnA, a key enzyme in the process to assimilate ammonia. When cellular nitrogen levels are high, the C-terminal adenylyl transferase (AT) inactivates GlnA by covalent transfer of an adenylyl group from ATP to specific tyrosine residue of GlnA, thus reducing its activity. Conversely, when nitrogen levels are low, the N-terminal adenylyl removase (AR) activates GlnA by removing the adenylyl group by phosphorolysis, increasing its activity. The regulatory region of GlnE binds the signal transduction protein PII (GlnB) which indicates the nitrogen status of the cell. This Shewanella woodyi (strain ATCC 51908 / MS32) protein is Bifunctional glutamine synthetase adenylyltransferase/adenylyl-removing enzyme.